We begin with the raw amino-acid sequence, 2280 residues long: Metacaspase-3 (2280 aa).

7 disordered regions span residues 56-83 (ILSKGKKNKNENIKKRINEKDNDTDRED), 202-284 (YSTE…THRG), 791-819 (YKNSMNSNDDIQNSNNNNNNNNNNNMVNN), 931-954 (DDNSVQDSFFSRTERSNSQNRYDK), 994-1015 (SGKYQRNIPQNDDNDHNDDDSE), 1278-1306 (KTNNKTNSNYSSNNNNDNNNNNNNSNPFI), and 1469-1500 (KAPTNVKAPTNVKAPTNVNAPTNVNAPTNANA). Over residues 63-83 (NKNENIKKRINEKDNDTDRED) the composition is skewed to basic and acidic residues. 2 stretches are compositionally biased toward polar residues: residues 205 to 219 (EHTQSIDNNNITSKR) and 228 to 278 (DKAQ…NRKG). Low complexity-rich tracts occupy residues 793 to 819 (NSMNSNDDIQNSNNNNNNNNNNNMVNN) and 931 to 941 (DDNSVQDSFFS). 2 stretches are compositionally biased toward low complexity: residues 1278–1303 (KTNNKTNSNYSSNNNNDNNNNNNNSN) and 1482–1500 (APTNVNAPTNVNAPTNANA).

Belongs to the peptidase C14B family.

Functionally, protease that cleaves specifically after arginine or lysine residues. This chain is Metacaspase-3, found in Plasmodium falciparum (isolate 3D7).